The following is a 214-amino-acid chain: Peroxiredoxin-5, mitochondrial (214 aa).

The transit peptide at Met-1–Ala-52 directs the protein to the mitochondrion. The 159-residue stretch at Ile-56–Leu-214 folds into the Thioredoxin domain. An N6-acetyllysine modification is found at Lys-75. Lys-83 is subject to N6-acetyllysine; alternate. Residue Lys-83 is modified to N6-succinyllysine; alternate. Cys-100 (cysteine sulfenic acid (-SOH) intermediate) is an active-site residue. A lipid anchor (S-palmitoyl cysteine) is attached at Cys-100. The cysteines at positions 100 and 204 are disulfide-linked. The residue at position 116 (Lys-116) is an N6-succinyllysine. Residues Ser-171 and Ser-182 each carry the phosphoserine modification. Positions Ser-212 to Leu-214 match the Microbody targeting signal motif.

Belongs to the peroxiredoxin family. Prx5 subfamily. As to quaternary structure, monomer. Post-translationally, S-palmitoylated. Palmitoylation occurs on the active site, inhibiting its reactivity; therefore PRDX5 palmitoylation status determines its antioxidant capacity. In terms of processing, S-palmitoylated. Depalmitoylated by ABHD10. Widely expressed.

It is found in the mitochondrion. The protein localises to the cytoplasm. Its subcellular location is the peroxisome matrix. It catalyses the reaction a hydroperoxide + [thioredoxin]-dithiol = an alcohol + [thioredoxin]-disulfide + H2O. Its function is as follows. Thiol-specific peroxidase that catalyzes the reduction of hydrogen peroxide and organic hydroperoxides to water and alcohols, respectively. Plays a role in cell protection against oxidative stress by detoxifying peroxides and as sensor of hydrogen peroxide-mediated signaling events. This chain is Peroxiredoxin-5, mitochondrial, found in Homo sapiens (Human).